The chain runs to 102 residues: Small ribosomal subunit protein uS10 (102 aa).

It belongs to the universal ribosomal protein uS10 family. In terms of assembly, part of the 30S ribosomal subunit.

Its function is as follows. Involved in the binding of tRNA to the ribosomes. In Planobispora rosea, this protein is Small ribosomal subunit protein uS10.